A 236-amino-acid polypeptide reads, in one-letter code: Phosphoribosylaminoimidazole-succinocarboxamide synthase (236 aa).

The protein belongs to the SAICAR synthetase family.

The catalysed reaction is 5-amino-1-(5-phospho-D-ribosyl)imidazole-4-carboxylate + L-aspartate + ATP = (2S)-2-[5-amino-1-(5-phospho-beta-D-ribosyl)imidazole-4-carboxamido]succinate + ADP + phosphate + 2 H(+). The protein operates within purine metabolism; IMP biosynthesis via de novo pathway; 5-amino-1-(5-phospho-D-ribosyl)imidazole-4-carboxamide from 5-amino-1-(5-phospho-D-ribosyl)imidazole-4-carboxylate: step 1/2. This chain is Phosphoribosylaminoimidazole-succinocarboxamide synthase, found in Campylobacter jejuni subsp. jejuni serotype O:2 (strain ATCC 700819 / NCTC 11168).